Reading from the N-terminus, the 402-residue chain is Putative F-box protein At1g70970 (402 aa).

One can recognise an F-box domain in the interval 4–52; it reads SSSETLHVEDLQTEIMSWLPLKSLLRFVIVSKKWASIIRGEQFKALYLR.

This Arabidopsis thaliana (Mouse-ear cress) protein is Putative F-box protein At1g70970.